A 513-amino-acid polypeptide reads, in one-letter code: Histidine ammonia-lyase (513 aa).

The 5-imidazolinone (Ala-Gly) cross-link spans 142 to 144; it reads ASG. Position 143 is a 2,3-didehydroalanine (Ser) (serine 143).

The protein belongs to the PAL/histidase family. Post-translationally, contains an active site 4-methylidene-imidazol-5-one (MIO), which is formed autocatalytically by cyclization and dehydration of residues Ala-Ser-Gly.

The protein localises to the cytoplasm. The enzyme catalyses L-histidine = trans-urocanate + NH4(+). It participates in amino-acid degradation; L-histidine degradation into L-glutamate; N-formimidoyl-L-glutamate from L-histidine: step 1/3. This is Histidine ammonia-lyase from Roseobacter denitrificans (strain ATCC 33942 / OCh 114) (Erythrobacter sp. (strain OCh 114)).